Here is a 137-residue protein sequence, read N- to C-terminus: Large ribosomal subunit protein uL16 (137 aa).

It belongs to the universal ribosomal protein uL16 family. As to quaternary structure, part of the 50S ribosomal subunit.

Binds 23S rRNA and is also seen to make contacts with the A and possibly P site tRNAs. This Afipia carboxidovorans (strain ATCC 49405 / DSM 1227 / KCTC 32145 / OM5) (Oligotropha carboxidovorans) protein is Large ribosomal subunit protein uL16.